The primary structure comprises 153 residues: Catabolic 3-dehydroquinase (153 aa).

Tyr-24 acts as the Proton acceptor in catalysis. Residues Asn-75, His-81, and Asp-88 each coordinate substrate. Residue His-101 is the Proton donor of the active site. Residues 102-103 (VS) and Arg-112 each bind substrate.

Belongs to the type-II 3-dehydroquinase family. In terms of assembly, homododecamer. Adopts a ring-like structure, composed of an arrangement of two hexameric rings stacked on top of one another.

It catalyses the reaction 3-dehydroquinate = 3-dehydroshikimate + H2O. The protein operates within aromatic compound metabolism; 3,4-dihydroxybenzoate biosynthesis; 3,4-dihydroxybenzoate from 3-dehydroquinate: step 1/2. Functionally, is involved in the catabolism of quinate. Allows the utilization of quinate as carbon source via the beta-ketoadipate pathway. The chain is Catabolic 3-dehydroquinase from Emericella nidulans (strain FGSC A4 / ATCC 38163 / CBS 112.46 / NRRL 194 / M139) (Aspergillus nidulans).